Reading from the N-terminus, the 166-residue chain is Photosystem I assembly protein Ycf3 (166 aa).

TPR repeat units follow at residues 35-68, 72-105, and 120-153; these read AFTY…EIDA, SYML…NPRL, and GEQA…SPTS.

Belongs to the Ycf3 family.

The protein localises to the plastid. The protein resides in the chloroplast thylakoid membrane. In terms of biological role, essential for the assembly of the photosystem I (PSI) complex. May act as a chaperone-like factor to guide the assembly of the PSI subunits. This chain is Photosystem I assembly protein Ycf3, found in Bigelowiella natans (Pedinomonas minutissima).